A 271-amino-acid chain; its full sequence is Cobalt import ATP-binding protein CbiO (271 aa).

In terms of domain architecture, ABC transporter spans 2–236; that stretch reads LATSDLWFRY…TEAMEHAGLT (235 aa). Residue 34-41 participates in ATP binding; sequence GANGCGKS.

It belongs to the ABC transporter superfamily. Cobalt importer (TC 3.A.1.18.1) family. Forms an energy-coupling factor (ECF) transporter complex composed of an ATP-binding protein (A component, CbiO), a transmembrane protein (T component, CbiQ) and 2 possible substrate-capture proteins (S components, CbiM and CbiN) of unknown stoichimetry.

It localises to the cell inner membrane. Its pathway is cofactor biosynthesis; adenosylcobalamin biosynthesis. Part of the energy-coupling factor (ECF) transporter complex CbiMNOQ involved in cobalt import. Presumably responsible for energy coupling to the transport system. The protein is Cobalt import ATP-binding protein CbiO of Salmonella typhi.